We begin with the raw amino-acid sequence, 755 residues long: Dolichyl-phosphate-mannose--protein mannosyltransferase 4 (755 aa).

Residues 1–23 (MSQTLKKRGGNSSGRKSPTTSNI) are disordered. An N-linked (GlcNAc...) asparagine glycan is attached at Asn11. A compositionally biased stretch (polar residues) spans 13-23 (SGRKSPTTSNI). 6 consecutive transmembrane segments (helical) span residues 92–112 (FFDL…WLIG), 147–167 (IVPI…ACLF), 185–205 (ILLD…YSKF), 212–232 (SFSS…SCVI), 237–257 (VGVF…WILL), and 278–298 (ALII…FAIL). 3 consecutive MIR domains span residues 325 to 389 (SKPV…IVPT), 396 to 454 (GTKV…LRLH), and 466 to 523 (KKEI…FDLI). The N-linked (GlcNAc...) asparagine glycan is linked to Asn445. 3 helical membrane passes run 595–615 (IFFI…SIYI), 640–660 (LYNT…PFFL), and 670–690 (YLPA…FICS). Asn691 carries N-linked (GlcNAc...) asparagine glycosylation. A helical membrane pass occupies residues 706 to 726 (YKIIAVVAACSTAIIWFFFYF).

It belongs to the glycosyltransferase 39 family. As to quaternary structure, forms a functional homodimer.

It localises to the endoplasmic reticulum membrane. It catalyses the reaction a di-trans,poly-cis-dolichyl beta-D-mannosyl phosphate + L-seryl-[protein] = 3-O-(alpha-D-mannosyl)-L-seryl-[protein] + a di-trans,poly-cis-dolichyl phosphate + H(+). The catalysed reaction is a di-trans,poly-cis-dolichyl beta-D-mannosyl phosphate + L-threonyl-[protein] = 3-O-(alpha-D-mannosyl)-L-threonyl-[protein] + a di-trans,poly-cis-dolichyl phosphate + H(+). The protein operates within protein modification; protein glycosylation. Protein mannosyltransferase (PMT) involved in hyphal growth and drug sensitivity. Transfers mannose from Dol-P-mannose to Ser or Thr residues on proteins. PMT1, PMT2 and PMT4 account for most of the protein-O-glycosylation activity, while PMT5 and PMT6 may specifically modulate a much narrower spectrum of target proteins. Accounts for the O-glycosylation of AXL2, responsible for bud site selection, as well as of the SEC20 t-SNARE component. O-glycosylation of SEC20 is essential for its stability. Required for biofilm formation. This chain is Dolichyl-phosphate-mannose--protein mannosyltransferase 4, found in Candida albicans (strain SC5314 / ATCC MYA-2876) (Yeast).